Here is a 295-residue protein sequence, read N- to C-terminus: Indole-3-glycerol phosphate synthase (295 aa).

This sequence belongs to the TrpC family.

The enzyme catalyses 1-(2-carboxyphenylamino)-1-deoxy-D-ribulose 5-phosphate + H(+) = (1S,2R)-1-C-(indol-3-yl)glycerol 3-phosphate + CO2 + H2O. Its pathway is amino-acid biosynthesis; L-tryptophan biosynthesis; L-tryptophan from chorismate: step 4/5. This is Indole-3-glycerol phosphate synthase from Prochlorococcus marinus (strain MIT 9515).